The chain runs to 501 residues: Dipeptide and tripeptide permease A (501 aa).

The Cytoplasmic segment spans residues 1–21 (MSTANKKPTESVSLNAFKQPK). A helical transmembrane segment spans residues 22–44 (AFYLIFSIELWERFGYYGLQGIM). The Periplasmic segment spans residues 45–59 (AVYLVKQLGMSEADS). A helical transmembrane segment spans residues 60-80 (ITLFSSFSALVYGLVAIGGWL). The Cytoplasmic portion of the chain corresponds to 81 to 89 (GDKILGTKR). Residues 90-110 (VIMLGAVVLAIGYALVAWSGH) traverse the membrane as a helical segment. A topological domain (periplasmic) is located at residue Asp111. A helical membrane pass occupies residues 112–132 (AGIVYMGMAAIAVGNGLFKAN). Over 133–153 (PSSLLSTCYAKDDPRLDGAFT) the chain is Cytoplasmic. Residues 154-174 (MYYMSVNIGSFFSMLATPWLA) form a helical membrane-spanning segment. The Periplasmic segment spans residues 175–178 (ARYG). The chain crosses the membrane as a helical span at residues 179–199 (WSTAFALSVVGMLITVVNFAF). Topologically, residues 200–219 (CQRWVKSYGSKPDFEPINFR) are cytoplasmic. Residues 220–240 (NLLLTIVGIVVLIAVATWLLH) form a helical membrane-spanning segment. The Periplasmic portion of the chain corresponds to 241–246 (NQDIAR). The helical transmembrane segment at 247 to 267 (MVLGVIALGIVIIFGKEAFSM) threads the bilayer. Residues 268-274 (HGAARRK) lie on the Cytoplasmic side of the membrane. A helical membrane pass occupies residues 275 to 295 (MIVAFILMLQAIIFFVLYSQM). Residues 296–320 (PTSLNFFAIRNVEHSILGIAFEPEQ) lie on the Periplasmic side of the membrane. The helical transmembrane segment at 321–341 (YQALNPFWIIIGSPILAAIYN) threads the bilayer. At 342–352 (RMGDTLPMPMK) the chain is on the cytoplasmic side. A helical membrane pass occupies residues 353-373 (FAIGMVLCSGAFLILPLGAKF). The Periplasmic segment spans residues 374–383 (ANDAGIVSVN). The helical transmembrane segment at 384 to 404 (WLIASYGLQSIGELMISGLGL) threads the bilayer. The Cytoplasmic portion of the chain corresponds to 405 to 414 (AMVAQLVPQR). Residues 415 to 435 (LMGFIMGSWFLTTAGANIIGG) traverse the membrane as a helical segment. Topologically, residues 436-459 (YVANLMAVPSDVTDPLMSLEVYGR) are periplasmic. The helical transmembrane segment at 460-480 (VFMQIGIATAVIAVLMLLTAP) threads the bilayer. Topologically, residues 481–501 (KLNRMTQDDDTAEKGSKAATV) are cytoplasmic.

This sequence belongs to the major facilitator superfamily. Proton-dependent oligopeptide transporter (POT/PTR) (TC 2.A.17) family. DtpA subfamily.

The protein resides in the cell inner membrane. Functionally, proton-dependent permease that transports di- and tripeptides. This is Dipeptide and tripeptide permease A from Salmonella typhimurium (strain LT2 / SGSC1412 / ATCC 700720).